The following is a 168-amino-acid chain: Fusion protein P6 (168 aa).

4 consecutive transmembrane segments (helical) span residues 29–49 (IWPL…AGFF), 52–72 (AGFT…TPTL), 94–114 (FQSL…ALIA), and 143–163 (ALPG…LWPS).

In terms of assembly, interacts with P3.

It localises to the virion membrane. Its function is as follows. Mediates the fusion with the host outer membrane during virus entry into the host cell. The protein is Fusion protein P6 (P6) of Pseudomonas savastanoi pv. phaseolicola (Pseudomonas syringae pv. phaseolicola).